A 333-amino-acid chain; its full sequence is Probable tRNA pseudouridine synthase B (333 aa).

The active-site Nucleophile is Asp-66. In terms of domain architecture, PUA spans 233–308 (LKKIIIKDSA…EVVEITRVIM (76 aa)).

Belongs to the pseudouridine synthase TruB family. Type 2 subfamily.

It carries out the reaction uridine(55) in tRNA = pseudouridine(55) in tRNA. Functionally, could be responsible for synthesis of pseudouridine from uracil-55 in the psi GC loop of transfer RNAs. In Methanococcus maripaludis (strain DSM 14266 / JCM 13030 / NBRC 101832 / S2 / LL), this protein is Probable tRNA pseudouridine synthase B.